The primary structure comprises 116 residues: Ribosome-binding factor A (116 aa).

It belongs to the RbfA family. As to quaternary structure, monomer. Binds 30S ribosomal subunits, but not 50S ribosomal subunits or 70S ribosomes.

It localises to the cytoplasm. In terms of biological role, one of several proteins that assist in the late maturation steps of the functional core of the 30S ribosomal subunit. Associates with free 30S ribosomal subunits (but not with 30S subunits that are part of 70S ribosomes or polysomes). Required for efficient processing of 16S rRNA. May interact with the 5'-terminal helix region of 16S rRNA. This is Ribosome-binding factor A from Ureaplasma urealyticum serovar 10 (strain ATCC 33699 / Western).